We begin with the raw amino-acid sequence, 402 residues long: Mannonate dehydratase (402 aa).

It belongs to the mannonate dehydratase family. The cofactor is Fe(2+). It depends on Mn(2+) as a cofactor.

It carries out the reaction D-mannonate = 2-dehydro-3-deoxy-D-gluconate + H2O. The protein operates within carbohydrate metabolism; pentose and glucuronate interconversion. Its function is as follows. Catalyzes the dehydration of D-mannonate. In Rhizobium meliloti (strain 1021) (Ensifer meliloti), this protein is Mannonate dehydratase.